The following is a 103-amino-acid chain: Sperm-associated antigen 11A (103 aa).

The signal sequence occupies residues 1 to 24; that stretch reads MRQRLLPSVTSLLLVALLFPGSSQ. Asparagine 29 carries N-linked (GlcNAc...) asparagine glycosylation.

It belongs to the SPAG11 family.

Its subcellular location is the secreted. Has antimicrobial activity against E.coli. Plays a role in the defense response in the male reproductive tract, contributing to sperm maturation, storage and protection. The protein is Sperm-associated antigen 11A of Pan troglodytes (Chimpanzee).